The chain runs to 520 residues: Cytochrome P450 monooxygenase 98 (520 aa).

A helical membrane pass occupies residues 7–27; it reads MLNNNLLIVIGTFAVCVYIVL. A heme-binding site is contributed by cysteine 445.

The protein belongs to the cytochrome P450 family. It depends on heme as a cofactor.

It localises to the membrane. It functions in the pathway secondary metabolite biosynthesis. Its function is as follows. Cytochrome P450 monooxygenase that is able to use pyrene, phenanthrene, 3,5-dimethoxy-trans-stilbene and 3,5,4'-trimethoxy-trans-stilbene as substrates for oxidation. The chain is Cytochrome P450 monooxygenase 98 from Postia placenta (strain ATCC 44394 / Madison 698-R) (Brown rot fungus).